A 391-amino-acid chain; its full sequence is Serpin B13 (391 aa).

The protein belongs to the serpin family. Ov-serpin subfamily. Skin specific.

It is found in the cytoplasm. Its function is as follows. May play a role in the proliferation or differentiation of keratinocytes. In Homo sapiens (Human), this protein is Serpin B13 (SERPINB13).